The primary structure comprises 120 residues: Large ribosomal subunit protein uL22 (120 aa).

It belongs to the universal ribosomal protein uL22 family. In terms of assembly, part of the 50S ribosomal subunit.

This protein binds specifically to 23S rRNA; its binding is stimulated by other ribosomal proteins, e.g. L4, L17, and L20. It is important during the early stages of 50S assembly. It makes multiple contacts with different domains of the 23S rRNA in the assembled 50S subunit and ribosome. Its function is as follows. The globular domain of the protein is located near the polypeptide exit tunnel on the outside of the subunit, while an extended beta-hairpin is found that lines the wall of the exit tunnel in the center of the 70S ribosome. The sequence is that of Large ribosomal subunit protein uL22 from Acaryochloris marina (strain MBIC 11017).